A 424-amino-acid polypeptide reads, in one-letter code: GTPase Obg (424 aa).

The 160-residue stretch at 1-160 folds into the Obg domain; it reads MFDRVEIRIK…YELILELKLI (160 aa). The OBG-type G domain occupies 161–328; sequence ADVAIIGYPN…LLDKVAEKLA (168 aa). GTP-binding positions include 167–174, 192–196, 213–216, 280–283, and 309–311; these read GYPNVGKS, FTTLS, EVPG, NKID, and SAL. Mg(2+) is bound by residues Ser-174 and Thr-194. One can recognise an OCT domain in the interval 349–424; sequence PAPKGKMGFH…IITGRLEWYL (76 aa).

The protein belongs to the TRAFAC class OBG-HflX-like GTPase superfamily. OBG GTPase family. As to quaternary structure, monomer. The cofactor is Mg(2+).

The protein localises to the cytoplasm. An essential GTPase which binds GTP, GDP and possibly (p)ppGpp with moderate affinity, with high nucleotide exchange rates and a fairly low GTP hydrolysis rate. Plays a role in control of the cell cycle, stress response, ribosome biogenesis and in those bacteria that undergo differentiation, in morphogenesis control. This is GTPase Obg from Dehalococcoides mccartyi (strain ATCC BAA-2266 / KCTC 15142 / 195) (Dehalococcoides ethenogenes (strain 195)).